A 230-amino-acid chain; its full sequence is MEGQRWLPLEANPEVTNQFLKQLGLHPNWQFVDVYGMEPELLSMVPRPVCAVLLLFPITEKYEVFRTEEEEKIKSQGQDVTSSVYFMKQTISNACGTIGLIHAIANNKDKMHFESGSTLKKFLEESVSMSPEERAKFLENYDAIRVTHETSAHEGQTEAPSIDEKVDLHFIALVHVDGHLYELDGRKPFPINHGKTSDETLLEDAIEVCKKFMERDPDELRFNAIALSAA.

One can recognise a UCH catalytic domain in the interval 5–229; it reads RWLPLEANPE…LRFNAIALSA (225 aa). Residues 8-13 are interaction with ubiquitin; it reads PLEANP. Cys95 acts as the Nucleophile in catalysis. Position 130 is a phosphoserine (Ser130). The interaction with ubiquitin. Crossover loop which restricts access of large ubiquitin adducts to the active site stretch occupies residues 152 to 159; the sequence is AHEGQTEA. The active-site Proton donor is His169. The interaction with ubiquitin stretch occupies residues 219–224; that stretch reads ELRFNA.

Belongs to the peptidase C12 family. Preferentially binds diubiquitin; the interaction does not hydrolyze diubiquitin but, in vitro, inhibits the hydrolyzing activity on other substrates. As to expression, ubiquitously expressed, with highest levels in brain, liver, heart, thymus, kidney and testis. Highly expressed in the cauda epididymidis, in meiotic pachytene spermatocytes and post-meiotic spematids. In the retina, enriched in the photoreceptor inner segment.

The protein resides in the cytoplasm. The enzyme catalyses Thiol-dependent hydrolysis of ester, thioester, amide, peptide and isopeptide bonds formed by the C-terminal Gly of ubiquitin (a 76-residue protein attached to proteins as an intracellular targeting signal).. Its activity is regulated as follows. Inhibited by monoubiquitin and diubiquitin. In terms of biological role, deubiquitinating enzyme (DUB) that controls levels of cellular ubiquitin through processing of ubiquitin precursors and ubiquitinated proteins. Thiol protease that recognizes and hydrolyzes a peptide bond at the C-terminal glycine of either ubiquitin or NEDD8. Has a 10-fold preference for Arg and Lys at position P3'', and exhibits a preference towards 'Lys-48'-linked ubiquitin chains. Deubiquitinates ENAC in apical compartments, thereby regulating apical membrane recycling. Indirectly increases the phosphorylation of IGFIR, AKT and FOXO1 and promotes insulin-signaling and insulin-induced adipogenesis. Required for stress-response retinal, skeletal muscle and germ cell maintenance. May be involved in working memory. Can hydrolyze UBB(+1), a mutated form of ubiquitin which is not effectively degraded by the proteasome. This chain is Ubiquitin carboxyl-terminal hydrolase isozyme L3 (Uchl3), found in Mus musculus (Mouse).